A 1343-amino-acid chain; its full sequence is DNA-directed RNA polymerase subunit beta (1343 aa).

It belongs to the RNA polymerase beta chain family. In terms of assembly, the RNAP catalytic core consists of 2 alpha, 1 beta, 1 beta' and 1 omega subunit. When a sigma factor is associated with the core the holoenzyme is formed, which can initiate transcription.

It carries out the reaction RNA(n) + a ribonucleoside 5'-triphosphate = RNA(n+1) + diphosphate. In terms of biological role, DNA-dependent RNA polymerase catalyzes the transcription of DNA into RNA using the four ribonucleoside triphosphates as substrates. The sequence is that of DNA-directed RNA polymerase subunit beta from Shewanella sp. (strain W3-18-1).